A 313-amino-acid polypeptide reads, in one-letter code: D-alanine--D-alanine ligase (313 aa).

The ATP-grasp domain occupies Lys108–Ala308. Val138 to Tyr193 provides a ligand contact to ATP. Mg(2+)-binding residues include Asp262, Glu275, and Asn277.

It belongs to the D-alanine--D-alanine ligase family. Mg(2+) serves as cofactor. Requires Mn(2+) as cofactor.

The protein resides in the cytoplasm. It carries out the reaction 2 D-alanine + ATP = D-alanyl-D-alanine + ADP + phosphate + H(+). The protein operates within cell wall biogenesis; peptidoglycan biosynthesis. In terms of biological role, cell wall formation. The polypeptide is D-alanine--D-alanine ligase (Burkholderia ambifaria (strain ATCC BAA-244 / DSM 16087 / CCUG 44356 / LMG 19182 / AMMD) (Burkholderia cepacia (strain AMMD))).